Reading from the N-terminus, the 175-residue chain is Homeobox expressed in ES cells 1 (175 aa).

Residues 1–44 (MSPNLQEGARLVEGKPSSTSFSIESILGLDQKKDDAPSMKPHRP) form a disordered region. Positions 108 to 167 (GRRPRTAFTQNQVEVLENVFRVNCYPGIDIREDLARKLNLEEDRIQIWFQNRRAKLKRSH) form a DNA-binding region, homeobox.

The protein belongs to the ANF homeobox family. In terms of assembly, interacts with TLE1.

The protein resides in the nucleus. Its function is as follows. Required for the normal development of the forebrain, eyes and other anterior structures such as the olfactory placodes and pituitary gland. Possible transcriptional repressor. Binds to the palindromic PIII sequence, 5'-AGCTTGAGTCTAATTGAATTAACTGTAC-3'. The sequence is that of Homeobox expressed in ES cells 1 (HESX1) from Oryctolagus cuniculus (Rabbit).